The chain runs to 172 residues: Centrin-2 (172 aa).

Residues 1 to 30 are disordered; it reads MASNFKKANMASSSQRKRMSPKPELTEEQK. N-acetylalanine is present on Ala2. The interval 2-25 is required for self-assembly; it reads ASNFKKANMASSSQRKRMSPKPEL. Ser20 is modified (phosphoserine). Lys22 participates in a covalent cross-link: Glycyl lysine isopeptide (Lys-Gly) (interchain with G-Cter in SUMO2). Phosphothreonine is present on Thr26. EF-hand domains lie at 28 to 63, 64 to 99, 101 to 136, and 137 to 172; these read EQKQ…LGFE, PKKE…KMSE, DTKE…LGEN, and LTDE…TSLY. Asp41, Asp43, Thr45, Thr47, and Glu52 together coordinate Ca(2+). Ca(2+)-binding residues include Asp150, Asp152, Asp154, Glu156, and Glu161.

Belongs to the centrin family. As to quaternary structure, monomer. Homooligomer. Interacts with SFI1. Interacts with CCP110. Component of the XPC complex composed of XPC, RAD23B and CETN2. Component of the nuclear pore complex (NPC)-associated TREX-2 complex (transcription and export complex 2), composed of at least GANP, 2 copies of ENY2, PCID2, SEM1/DSS1, and either centrin CETN2 or centrin CETN3. The TREX-2 complex also associates with ALYREF/ALY and with the nucleoporin NUP153. Interacts with USP49. Forms a microtubule-associated complex with POC5, POC1B and FAM161A. Interacts with CCDC15.

It is found in the cytoplasm. It localises to the cytoskeleton. Its subcellular location is the microtubule organizing center. The protein localises to the centrosome. The protein resides in the centriole. It is found in the nucleus envelope. It localises to the nucleus. Its subcellular location is the nuclear pore complex. Functionally, plays a fundamental role in microtubule organizing center structure and function. Required for centriole duplication and correct spindle formation. Has a role in regulating cytokinesis and genome stability via cooperation with CALM1 and CCP110. In terms of biological role, involved in global genome nucleotide excision repair (GG-NER) by acting as component of the XPC complex. Cooperatively with RAD23B appears to stabilize XPC. In vitro, stimulates DNA binding of the XPC:RAD23B dimer. Its function is as follows. The XPC complex is proposed to represent the first factor bound at the sites of DNA damage and together with other core recognition factors, XPA, RPA and the TFIIH complex, is part of the pre-incision (or initial recognition) complex. The XPC complex recognizes a wide spectrum of damaged DNA characterized by distortions of the DNA helix such as single-stranded loops, mismatched bubbles or single-stranded overhangs. The orientation of XPC complex binding appears to be crucial for inducing a productive NER. XPC complex is proposed to recognize and to interact with unpaired bases on the undamaged DNA strand which is followed by recruitment of the TFIIH complex and subsequent scanning for lesions in the opposite strand in a 5'-to-3' direction by the NER machinery. Cyclobutane pyrimidine dimers (CPDs) which are formed upon UV-induced DNA damage esacpe detection by the XPC complex due to a low degree of structural perurbation. Instead they are detected by the UV-DDB complex which in turn recruits and cooperates with the XPC complex in the respective DNA repair. As a component of the TREX-2 complex, involved in the export of mRNAs to the cytoplasm through the nuclear pores. This is Centrin-2 (CETN2) from Homo sapiens (Human).